A 631-amino-acid chain; its full sequence is MSDERRLPSSAVGWLACGGLSLLANAWGILSVGAKQKKWKPLEFLLCTLAATHMLNVAVPIATYAVVQLRRQRPDYEWNEGLCKVFVSTFYTLTLATCFSVTSISYHRMWMVRWPVNYRLSNAKKQAVHTVMGIWMVSFILSALPAVGWHDTSERFYTHGCRFIVAEIGLGFGVCFLLLVGGSVAMGMVCTAIALFQTLATQVGHRADRRTFTVPTIVVEDAQGKRRSSIDGSEPARTSLQITGLVATIVVIYDCLMGFPVLVVSFSSLRADASAPWMALCVLWCSVTQALLLPLFLWTCDRYRADLKAVWEKCVALMANDEDSDNETSLEGSISPDMVLERSLDYSYGGDFVALDRMAKYELSALEGGLPQLYPLRPLQEDRMQYLQGAGRHRCGFPGGQPCFSPAGCSQVPPTRRFSHDDADVWAAVPLPTFLPRWSSGEDLAALAHLMLPAGSDRRRGSLLAFAEDAPPFRPRRRSAESLLSLQPSSLDGGPRHAQDSPPGSPRRRPGPGARSASVSLLPDAFALTAFEREPQALRRVPAPAQPFPAARDSAEPAEVPTPPGGRTQRSQGRRAARTHVGPLQSSLSASWGEPGGLHAAGCGSISSFLSSPSESSGYVTLHSDSLGSAS.

Residues 1-11 (MSDERRLPSSA) are Extracellular-facing. Residues 12–32 (VGWLACGGLSLLANAWGILSV) form a helical membrane-spanning segment. Over 33–41 (GAKQKKWKP) the chain is Cytoplasmic. Residues 42 to 62 (LEFLLCTLAATHMLNVAVPIA) form a helical membrane-spanning segment. Residues 63-84 (TYAVVQLRRQRPDYEWNEGLCK) are Extracellular-facing. The helical transmembrane segment at 85–105 (VFVSTFYTLTLATCFSVTSIS) threads the bilayer. Residues 106–126 (YHRMWMVRWPVNYRLSNAKKQ) lie on the Cytoplasmic side of the membrane. A helical membrane pass occupies residues 127-147 (AVHTVMGIWMVSFILSALPAV). Over 148–162 (GWHDTSERFYTHGCR) the chain is Extracellular. A helical membrane pass occupies residues 163–183 (FIVAEIGLGFGVCFLLLVGGS). Residues 184 to 243 (VAMGMVCTAIALFQTLATQVGHRADRRTFTVPTIVVEDAQGKRRSSIDGSEPARTSLQIT) lie on the Cytoplasmic side of the membrane. A helical transmembrane segment spans residues 244–264 (GLVATIVVIYDCLMGFPVLVV). Topologically, residues 265-276 (SFSSLRADASAP) are extracellular. Residues 277–297 (WMALCVLWCSVTQALLLPLFL) form a helical membrane-spanning segment. The Cytoplasmic portion of the chain corresponds to 298–631 (WTCDRYRADL…LHSDSLGSAS (334 aa)). Disordered stretches follow at residues 486–518 (LQPS…RSAS), 546–590 (QPFP…SLSA), and 603–631 (CGSI…GSAS). The span at 605–617 (SISSFLSSPSESS) shows a compositional bias: low complexity.

Belongs to the G-protein coupled receptor 1 family.

It localises to the cell membrane. In terms of biological role, orphan receptor. This chain is Probable G-protein coupled receptor 153 (Gpr153), found in Mus musculus (Mouse).